Reading from the N-terminus, the 117-residue chain is Gamma-aminobutyric acid receptor-associated protein-like 2 (117 aa).

Lys-24 carries the post-translational modification N6-acetyllysine. Ser-39, Ser-87, and Ser-88 each carry phosphoserine. The Phosphatidylethanolamine amidated glycine; alternate moiety is linked to residue Gly-116. The Phosphatidylserine amidated glycine; alternate moiety is linked to residue Gly-116. A propeptide (removed in mature form) is located at residue Phe-117.

This sequence belongs to the ATG8 family. In terms of assembly, monomer. Interacts with ATG3, ATG7, ATG13 and ULK1. Interacts with TP53INP1 and TP53INP2. Interacts with TBC1D25. Directly interacts with SQSTM1 and BNIP3. Interacts with TECPR2 and PCM1. Interacts with TBC1D5. Interacts with TRIM5. Interacts with MEFV and TRIM21. Interacts with WDFY3. Interacts with UBA5; promoting recruitment of UBA5 to the endoplasmic reticulum membrane. Interacts with GOSR1. Interacts with KBTBD6 and KBTBD7; the interaction is direct. Interacts with reticulophagy regulators RETREG1, RETREG2 and RETREG3. Interacts with IRGM. Interacts with DNM2. Interacts with NCOA4. Interacts with IRGQ. The precursor molecule is cleaved by ATG4 (ATG4A, ATG4B, ATG4C or ATG4D) to expose the glycine at the C-terminus and form the cytosolic form, GABARAPL2-I. The processed form is then activated by APG7L/ATG7, transferred to ATG3 and conjugated to phosphatidylethanolamine (PE) phospholipid to form the membrane-bound form, GABARAPL2-II. During non-canonical autophagy, the processed form is conjugated to phosphatidylserine (PS) phospholipid. ATG4 proteins also mediate the delipidation of PE-conjugated forms required for GABARAPL2 recycling when autophagosomes fuse with lysosomes. In addition, ATG4B and ATG4D mediate delipidation of ATG8 proteins conjugated to PS during non-canonical autophagy. ATG4B constitutes the major protein for proteolytic activation. ATG4D is the main enzyme for delipidation activity. In terms of processing, phosphorylation at Ser-87 and Ser-88 by TBK1 prevents interaction with ATG4 (ATG4A, ATG4B, ATG4C or ATG4D). Phosphorylation by TBK1 on autophagosomes prevents their delipidation by ATG4 and premature removal from nascent autophagosomes. Ubiquitous. Expressed at high levels in the brain, heart, prostate, ovary, spleen and skeletal muscle. Expressed at very low levels in lung, thymus and small intestine.

It is found in the cytoplasmic vesicle. The protein localises to the autophagosome. Its subcellular location is the endoplasmic reticulum membrane. The protein resides in the golgi apparatus. Functionally, ubiquitin-like modifier involved in intra-Golgi traffic. Modulates intra-Golgi transport through coupling between NSF activity and SNAREs activation. It first stimulates the ATPase activity of NSF which in turn stimulates the association with GOSR1. Involved in autophagy. Plays a role in mitophagy which contributes to regulate mitochondrial quantity and quality by eliminating the mitochondria to a basal level to fulfill cellular energy requirements and preventing excess ROS production. Whereas LC3s are involved in elongation of the phagophore membrane, the GABARAP/GATE-16 subfamily is essential for a later stage in autophagosome maturation. The sequence is that of Gamma-aminobutyric acid receptor-associated protein-like 2 from Bos taurus (Bovine).